The sequence spans 592 residues: Hepatocyte nuclear factor 1-alpha-B (592 aa).

Residues 1–31 form a dimerization region; the sequence is MASQLSYLQQELLRALLESGVTKEALKKALA. Residues 1–32 enclose the HNF-p1 domain; the sequence is MASQLSYLQQELLRALLESGVTKEALKKALAD. Positions 54–78 are disordered; sequence NCVQLPNGLGEPQMSEDESSDDGGD. Residues 67–77 show a composition bias toward acidic residues; sequence MSEDESSDDGG. A POU-specific atypical domain is found at 85–180; that stretch reads KELERLSPEE…IARQFTHAGH (96 aa). Interaction with DNA regions lie at residues 128–130, 141–147, 153–156, 201–204, 261–263, and 268–271; these read QRE, HLSQHLN, KTQK, RFKW, RVY, and NSGK. The Nuclear localization signal motif lies at 195 to 203; that stretch reads KKMRRNRFK. The homeobox; HNF1-type DNA-binding region spans 197-277; the sequence is MRRNRFKWGP…NSGKEEAFRH (81 aa). 2 stretches are compositionally biased toward polar residues: residues 284-295 and 306-328; these read YNGQQSSAQPLS and RYTQ…TLSP. Disordered stretches follow at residues 284–329 and 511–533; these read YNGQ…LSPS and KQVV…HNQD.

The protein belongs to the HNF1 homeobox family. In terms of assembly, binds DNA as dimer. Forms a homodimer or heterodimer with HNF1-alpha-A. Potentially also form a heterodimer with HNF1-beta. Liver.

The protein localises to the nucleus. Transcriptional activator that regulates the tissue specific expression of multiple genes, especially in pancreas and liver. Binds to the hepatocyte specific promoter element HP1. Binds to the inverted palindrome 5'-GTTAATNATTAAC-3'. The polypeptide is Hepatocyte nuclear factor 1-alpha-B (hnf1a-b) (Xenopus laevis (African clawed frog)).